Here is a 130-residue protein sequence, read N- to C-terminus: Succinate dehydrogenase cytochrome b556 subunit (130 aa).

Residues 1–26 (MADVNRGNRPLSPHLQVYRLPLAAIT) lie on the Cytoplasmic side of the membrane. Residues 27 to 52 (SIMTRITGHALVAGIVLITWWLVAAV) form a helical membrane-spanning segment. Residues 53–68 (TSPGAFACADWVVRSW) are Periplasmic-facing. A helical transmembrane segment spans residues 69 to 89 (LGFIILTGSMWALWYHLLAGL). H84 contributes to the heme binding site. The Cytoplasmic segment spans residues 90–109 (RHLFYDAGYGLEIEQAHKSS). Residues 110 to 130 (QALIAGSVVLAVLTLIVFFVF) form a helical membrane-spanning segment.

Belongs to the cytochrome b560 family. In terms of assembly, part of an enzyme complex containing four subunits: a flavoprotein, an iron-sulfur protein, plus two membrane-anchoring proteins, SdhC and SdhD. The complex can form homotrimers. Heme is required as a cofactor.

Its subcellular location is the cell inner membrane. It participates in carbohydrate metabolism; tricarboxylic acid cycle. Its function is as follows. Membrane-anchoring subunit of succinate dehydrogenase (SDH). The sequence is that of Succinate dehydrogenase cytochrome b556 subunit (sdhC) from Paracoccus denitrificans.